Reading from the N-terminus, the 406-residue chain is Odorant receptor 42a (406 aa).

Residues 1-44 (MDLRRWFPTLYTQSKDSPVRSRDATLYLLRCVFLMGVRKPPAKF) lie on the Cytoplasmic side of the membrane. A helical transmembrane segment spans residues 45–65 (FVAYVLWSFALNFCSTFYQPI). Topologically, residues 66–86 (GFLTGYISHLSEFSPGEFLTS) are extracellular. The helical transmembrane segment at 87–107 (LQVAFNAWSCSTKVLIVWALV) threads the bilayer. Residues 108–142 (KRFDEANNLLDEMDRRITDPGERLQIHRAVSLSNR) are Cytoplasmic-facing. The helical transmembrane segment at 143–163 (IFFFFMAVYMVYATNTFLSAI) threads the bilayer. The Extracellular portion of the chain corresponds to 164–181 (FIGRPPYQNYYPFLDWRS). The chain crosses the membrane as a helical span at residues 182–202 (STLHLALQAGLEYFAMAGACF). At 203-271 (QDVCVDCYPV…DCLRPVISGT (69 aa)) the chain is on the cytoplasmic side. A helical transmembrane segment spans residues 272–292 (IFVQFLVVGLVLGFTLINIVL). Residues 293 to 298 (FANLGS) lie on the Extracellular side of the membrane. A helical transmembrane segment spans residues 299–319 (AIAALSFMAAVLLETTPFCIL). The Cytoplasmic portion of the chain corresponds to 320–359 (CNYLTEDCYKLADALFQSNWIDEEKRYQKTLMYFLQKLQQ). The chain crosses the membrane as a helical span at residues 360 to 380 (PITFMAMNVFPISVGTNISVT). Residues 381 to 406 (KFSFSVFTLVKQMNISEKLAKSEMEE) lie on the Extracellular side of the membrane. N-linked (GlcNAc...) asparagine glycosylation occurs at Asn-394.

Belongs to the insect chemoreceptor superfamily. Heteromeric odorant receptor channel (TC 1.A.69) family. Or2a subfamily. Interacts with Orco. Complexes exist early in the endomembrane system in olfactory sensory neurons (OSNs), coupling these complexes to the conserved ciliary trafficking pathway.

The protein resides in the cell membrane. In terms of biological role, odorant receptor which mediates acceptance or avoidance behavior, depending on its substrates. The odorant receptor repertoire encodes a large collection of odor stimuli that vary widely in identity, intensity, and duration. May form a complex with Orco to form odorant-sensing units, providing sensitive and prolonged odorant signaling and calcium permeability. Involved in the behavioral responses to butanol, ethyl acetate, propyl acetate, and pentyl acetate. Also responds to pyrazines. In Drosophila melanogaster (Fruit fly), this protein is Odorant receptor 42a (Or42a).